Consider the following 72-residue polypeptide: High-potential iron-sulfur protein isozyme 1 (72 aa).

[4Fe-4S] cluster-binding residues include Cys34, Cys37, Cys51, and Cys65.

This sequence belongs to the high-potential iron-sulfur protein (HiPIP) family. In terms of assembly, homodimer.

Functionally, specific class of high-redox-potential 4Fe-4S ferredoxins. Functions in anaerobic electron transport in most purple and in some other photosynthetic bacteria and in at least one genus (Paracoccus) of halophilic, denitrifying bacteria. This chain is High-potential iron-sulfur protein isozyme 1 (hip1), found in Ectothiorhodospira shaposhnikovii (Ectothiorhodospira vacuolata).